The following is a 263-amino-acid chain: Shikimate dehydrogenase (NADP(+)) (263 aa).

Shikimate is bound by residues 14–16 (SLS) and Thr-60. Lys-64 (proton acceptor) is an active-site residue. Residues Asn-85 and Asp-100 each coordinate shikimate. NADP(+) is bound by residues 123 to 127 (GAGGA), 146 to 151 (NRTPQR), and Leu-205. Tyr-207 contacts shikimate. Gly-228 lines the NADP(+) pocket.

It belongs to the shikimate dehydrogenase family. Homodimer.

It catalyses the reaction shikimate + NADP(+) = 3-dehydroshikimate + NADPH + H(+). Its pathway is metabolic intermediate biosynthesis; chorismate biosynthesis; chorismate from D-erythrose 4-phosphate and phosphoenolpyruvate: step 4/7. Involved in the biosynthesis of the chorismate, which leads to the biosynthesis of aromatic amino acids. Catalyzes the reversible NADPH linked reduction of 3-dehydroshikimate (DHSA) to yield shikimate (SA). This Thermus thermophilus (strain ATCC BAA-163 / DSM 7039 / HB27) protein is Shikimate dehydrogenase (NADP(+)).